The sequence spans 682 residues: Two-component system protein A (682 aa).

The disordered stretch occupies residues 11–41; sequence SLDDNDNGQQHQDEVQAKHQDQGHTCPSRPS. The span at 21 to 32 shows a compositional bias: basic and acidic residues; it reads HQDEVQAKHQDQ. PAS domains lie at 45-105 and 166-239; these read LSRI…PILY and MNET…LREG. The PAC domain maps to 241–292; the sequence is IEDEGWRYRRDGSRFWANVLITPIYQFGQHVGFVKVTRDLTERKEAEACMIA. Residues 307–530 form the Histidine kinase domain; that stretch reads NISHEIRTPM…VFWFTAKMGG (224 aa). His310 bears the Phosphohistidine; by autocatalysis mark. Residues 563-680 enclose the Response regulatory domain; sequence HVLLVEDNIV…QLLRVLWKWF (118 aa). Asp615 is subject to 4-aspartylphosphate.

In terms of processing, activation probably requires a transfer of a phosphate group between a His in the histidine kinase domain and an Asp of the response regulatory domain.

The protein localises to the cytoplasm. It carries out the reaction ATP + protein L-histidine = ADP + protein N-phospho-L-histidine.. In terms of biological role, may be part of a two-component regulatory system required for formation of conidia on certain growth media. This chain is Two-component system protein A, found in Emericella nidulans (strain FGSC A4 / ATCC 38163 / CBS 112.46 / NRRL 194 / M139) (Aspergillus nidulans).